We begin with the raw amino-acid sequence, 93 residues long: Integration host factor subunit beta (93 aa).

This sequence belongs to the bacterial histone-like protein family. Heterodimer of an alpha and a beta chain.

Functionally, this protein is one of the two subunits of integration host factor, a specific DNA-binding protein that functions in genetic recombination as well as in transcriptional and translational control. This chain is Integration host factor subunit beta, found in Idiomarina loihiensis (strain ATCC BAA-735 / DSM 15497 / L2-TR).